The primary structure comprises 269 residues: Cytochrome c oxidase subunit 3 (269 aa).

7 helical membrane-spanning segments follow: residues 21 to 41 (PWPI…ALAM), 45 to 65 (IGNM…ATLW), 90 to 110 (GFLL…WAYF), 138 to 160 (PLLN…HALI), 167 to 187 (ALSG…CQYI), 205 to 225 (FYAG…MLAI), and 247 to 267 (VIYL…FYWW).

The protein belongs to the cytochrome c oxidase subunit 3 family. Component of the cytochrome c oxidase (complex IV, CIV), a multisubunit enzyme composed of a catalytic core of 3 subunits and several supernumerary subunits. The complex exists as a monomer or a dimer and forms supercomplexes (SCs) in the inner mitochondrial membrane with ubiquinol-cytochrome c oxidoreductase (cytochrome b-c1 complex, complex III, CIII).

The protein resides in the mitochondrion inner membrane. It carries out the reaction 4 Fe(II)-[cytochrome c] + O2 + 8 H(+)(in) = 4 Fe(III)-[cytochrome c] + 2 H2O + 4 H(+)(out). Component of the cytochrome c oxidase, the last enzyme in the mitochondrial electron transport chain which drives oxidative phosphorylation. The respiratory chain contains 3 multisubunit complexes succinate dehydrogenase (complex II, CII), ubiquinol-cytochrome c oxidoreductase (cytochrome b-c1 complex, complex III, CIII) and cytochrome c oxidase (complex IV, CIV), that cooperate to transfer electrons derived from NADH and succinate to molecular oxygen, creating an electrochemical gradient over the inner membrane that drives transmembrane transport and the ATP synthase. Cytochrome c oxidase is the component of the respiratory chain that catalyzes the reduction of oxygen to water. Electrons originating from reduced cytochrome c in the intermembrane space (IMS) are transferred via the dinuclear copper A center (CU(A)) of subunit 2 and heme A of subunit 1 to the active site in subunit 1, a binuclear center (BNC) formed by heme A3 and copper B (CU(B)). The BNC reduces molecular oxygen to 2 water molecules using 4 electrons from cytochrome c in the IMS and 4 protons from the mitochondrial matrix. The sequence is that of Cytochrome c oxidase subunit 3 (COX3) from Lachancea kluyveri (strain ATCC 58438 / CBS 3082 / BCRC 21498 / NBRC 1685 / JCM 7257 / NCYC 543 / NRRL Y-12651) (Yeast).